The chain runs to 399 residues: Serine/threonine-protein kinase PKZ1 (399 aa).

The interval 30–50 (PMQCAYQTQSHSNPEGAKRGR) is disordered. The region spanning 92–371 (WQLFDQIGAG…ADQMLQHPWM (280 aa)) is the Protein kinase domain. ATP is bound by residues 98-106 (IGAGAFGVV) and lysine 121. The active-site Proton acceptor is the aspartate 219.

It belongs to the protein kinase superfamily. CAMK Ser/Thr protein kinase family.

It catalyses the reaction L-seryl-[protein] + ATP = O-phospho-L-seryl-[protein] + ADP + H(+). The catalysed reaction is L-threonyl-[protein] + ATP = O-phospho-L-threonyl-[protein] + ADP + H(+). Its function is as follows. May regulate an early stage of the zoospore pathway. This chain is Serine/threonine-protein kinase PKZ1, found in Phytophthora infestans (strain T30-4) (Potato late blight agent).